The chain runs to 287 residues: Aquaporin PIP1-1 (287 aa).

2 consecutive transmembrane segments (helical) span residues Ile-57–Val-77 and Ile-92–Ile-114. Positions Asn-115–Ala-117 match the NPA 1 motif. Transmembrane regions (helical) follow at residues Val-134–Phe-154, Gly-176–Ala-196, and Ile-210–Ile-230. Positions Asn-236–Ala-238 match the NPA 2 motif. Residues Ile-258–Ile-278 traverse the membrane as a helical segment.

The protein belongs to the MIP/aquaporin (TC 1.A.8) family. PIP (TC 1.A.8.11) subfamily. In terms of assembly, may interact with PIP1-2 to form heteromers. Highly expressed in roots, shoots and developing tassels, and at lower levels in leaves.

The protein resides in the cell membrane. Functionally, water channel required to facilitate the transport of water across cell membrane. Active as heteromers with PIP1-2, but not as homomers. This is Aquaporin PIP1-1 (PIP1-1) from Zea mays (Maize).